The following is a 414-amino-acid chain: L-cysteine:1D-myo-inositol 2-amino-2-deoxy-alpha-D-glucopyranoside ligase (414 aa).

The tract at residues 1 to 38 (MRSWPAPEVPNLPEAGLPGPALPLHLHDTATGTVRPTR) is disordered. A compositionally biased stretch (low complexity) spans 11 to 38 (NLPEAGLPGPALPLHLHDTATGTVRPTR). C48 lines the Zn(2+) pocket. L-cysteinyl-5'-AMP is bound by residues 48 to 51 (CGIT), T63, and 86 to 88 (NVT). The short motif at 50–60 (ITPYDATHLGH) is the 'HIGH' region element. Positions 188–193 (ERGGDP) match the 'ERGGDP' region motif. W228 is an L-cysteinyl-5'-AMP binding site. Residue C232 coordinates Zn(2+). 250 to 252 (GSD) provides a ligand contact to L-cysteinyl-5'-AMP. Residue H257 coordinates Zn(2+). Position 284 (V284) interacts with L-cysteinyl-5'-AMP. Residues 290–294 (KMSKS) carry the 'KMSKS' region motif.

The protein belongs to the class-I aminoacyl-tRNA synthetase family. MshC subfamily. In terms of assembly, monomer. Zn(2+) is required as a cofactor.

It carries out the reaction 1D-myo-inositol 2-amino-2-deoxy-alpha-D-glucopyranoside + L-cysteine + ATP = 1D-myo-inositol 2-(L-cysteinylamino)-2-deoxy-alpha-D-glucopyranoside + AMP + diphosphate + H(+). Functionally, catalyzes the ATP-dependent condensation of GlcN-Ins and L-cysteine to form L-Cys-GlcN-Ins. In Thermomonospora curvata (strain ATCC 19995 / DSM 43183 / JCM 3096 / KCTC 9072 / NBRC 15933 / NCIMB 10081 / Henssen B9), this protein is L-cysteine:1D-myo-inositol 2-amino-2-deoxy-alpha-D-glucopyranoside ligase.